The chain runs to 173 residues: Transcription factor E (173 aa).

Residues 6 to 89 (PLEELLEFVR…YWYVDRETLN (84 aa)) form the HTH TFE/IIEalpha-type domain.

This sequence belongs to the TFE family. As to quaternary structure, monomer. Interaction with RNA polymerase subunits RpoF and RpoE is necessary for Tfe stimulatory transcription activity. Able to interact with Tbp and RNA polymerase in the absence of DNA promoter. Interacts both with the preinitiation and elongation complexes.

Transcription factor that plays a role in the activation of archaeal genes transcribed by RNA polymerase. Facilitates transcription initiation by enhancing TATA-box recognition by TATA-box-binding protein (Tbp), and transcription factor B (Tfb) and RNA polymerase recruitment. Not absolutely required for transcription in vitro, but particularly important in cases where Tbp or Tfb function is not optimal. It dynamically alters the nucleic acid-binding properties of RNA polymerases by stabilizing the initiation complex and destabilizing elongation complexes. Seems to translocate with the RNA polymerase following initiation and acts by binding to the non template strand of the transcription bubble in elongation complexes. The polypeptide is Transcription factor E (Ignicoccus hospitalis (strain KIN4/I / DSM 18386 / JCM 14125)).